The sequence spans 255 residues: F-box/SPRY domain-containing protein 1 (255 aa).

The region spanning 3–51 (DPVAALCNYNVLEVIFSYLELDDLSHCSQVCKSWYHFLNDENSDVWRWH) is the F-box domain. The region spanning 61 to 253 (LKSDLLSSVP…VSMVYLGTPL (193 aa)) is the B30.2/SPRY domain.

Belongs to the FBXO45/Fsn family. In terms of assembly, component of an E3 ubiquitin ligase complex composed of hiw and Fsn.

The protein localises to the synapse. Its pathway is protein modification; protein ubiquitination. Functionally, required in the presynaptic motoneuron to down-regulate the levels of wnd and restrain synaptic terminal growth at the neuromuscular junction (NMJ). The protein is F-box/SPRY domain-containing protein 1 of Drosophila sechellia (Fruit fly).